A 333-amino-acid chain; its full sequence is Anthranilate phosphoribosyltransferase (333 aa).

Residues Gly81, 84-85 (GD), Thr89, 91-94 (NIST), 109-117 (KHGNRSVSS), and Ala121 each bind 5-phospho-alpha-D-ribose 1-diphosphate. Gly81 is an anthranilate binding site. Ser93 contributes to the Mg(2+) binding site. Asn112 is a binding site for anthranilate. Arg167 lines the anthranilate pocket. Mg(2+)-binding residues include Asp225 and Glu226.

This sequence belongs to the anthranilate phosphoribosyltransferase family. In terms of assembly, homodimer. The cofactor is Mg(2+).

The catalysed reaction is N-(5-phospho-beta-D-ribosyl)anthranilate + diphosphate = 5-phospho-alpha-D-ribose 1-diphosphate + anthranilate. Its pathway is amino-acid biosynthesis; L-tryptophan biosynthesis; L-tryptophan from chorismate: step 2/5. Catalyzes the transfer of the phosphoribosyl group of 5-phosphorylribose-1-pyrophosphate (PRPP) to anthranilate to yield N-(5'-phosphoribosyl)-anthranilate (PRA). This chain is Anthranilate phosphoribosyltransferase, found in Actinobacillus succinogenes (strain ATCC 55618 / DSM 22257 / CCUG 43843 / 130Z).